Here is a 250-residue protein sequence, read N- to C-terminus: ATP synthase subunit a (250 aa).

Transmembrane regions (helical) follow at residues 31–51 (SAYM…GMAG), 85–105 (FFPL…IGII), 115–135 (LIVT…YGLY), 144–164 (LFVP…IEVI), 194–214 (FVGM…LPLG), and 217–237 (VAVT…FTIL).

It belongs to the ATPase A chain family. As to quaternary structure, F-type ATPases have 2 components, CF(1) - the catalytic core - and CF(0) - the membrane proton channel. CF(1) has five subunits: alpha(3), beta(3), gamma(1), delta(1), epsilon(1). CF(0) has four main subunits: a, b, b' and c.

The protein localises to the cell inner membrane. Its function is as follows. Key component of the proton channel; it plays a direct role in the translocation of protons across the membrane. The sequence is that of ATP synthase subunit a from Rhodopseudomonas palustris (strain BisB5).